A 436-amino-acid polypeptide reads, in one-letter code: Platelet-activating factor acetylhydrolase (436 aa).

The signal sequence occupies residues Met-1 to Pro-21. N-linked (GlcNAc...) asparagine glycans are attached at residues Asn-76 and Asn-200. Ser-271 serves as the catalytic Nucleophile. Catalysis depends on Asp-294, which acts as the Charge relay system. A glycan (N-linked (GlcNAc...) asparagine) is linked at Asn-324. His-349 (charge relay system) is an active-site residue.

The protein belongs to the AB hydrolase superfamily. Lipase family. In terms of processing, N-glycosylated. In terms of tissue distribution, plasma.

It is found in the secreted. The protein localises to the extracellular space. The enzyme catalyses a 1-O-alkyl-2-acetyl-sn-glycero-3-phosphocholine + H2O = a 1-O-alkyl-sn-glycero-3-phosphocholine + acetate + H(+). It catalyses the reaction 1-O-decyl-2-acetyl-sn-glycero-3-phosphocholine + H2O = 1-O-decyl-sn-glycero-3-phosphocholine + acetate + H(+). The catalysed reaction is 1-O-dodecyl-2-acetyl-sn-glycero-3-phosphocholine + H2O = 1-O-dodecyl-sn-glycero-3-phosphocholine + acetate + H(+). It carries out the reaction 1-O-tetradecyl-2-acetyl-sn-glycero-3-phosphocholine + H2O = 1-O-tetradecyl-sn-glycero-3-phosphocholine + acetate + H(+). The enzyme catalyses 1-O-hexadecyl-2-acetyl-sn-glycero-3-phosphocholine + H2O = 1-O-hexadecyl-sn-glycero-3-phosphocholine + acetate + H(+). It catalyses the reaction 1-O-octadecyl-2-acetyl-sn-glycero-3-phosphocholine + H2O = 1-O-octadecyl-sn-glycero-3-phosphocholine + acetate + H(+). The catalysed reaction is 1-hexadecanoyl-2-acetyl-sn-glycero-3-phosphocholine + H2O = 1-hexadecanoyl-sn-glycero-3-phosphocholine + acetate + H(+). It carries out the reaction 1-hexadecanoyl-2-propionyl-sn-glycero-3-phosphocholine + H2O = propanoate + 1-hexadecanoyl-sn-glycero-3-phosphocholine + H(+). The enzyme catalyses 1-hexadecanoyl-2-butanoyl-sn-glycero-3-phosphocholine + H2O = butanoate + 1-hexadecanoyl-sn-glycero-3-phosphocholine + H(+). It catalyses the reaction 1-hexadecanoyl-2-pentanoyl-sn-glycero-3-phosphocholine + H2O = pentanoate + 1-hexadecanoyl-sn-glycero-3-phosphocholine + H(+). The catalysed reaction is 1-hexadecanoyl-2-glutaroyl-sn-glycero-3-phosphocholine + H2O = glutarate + 1-hexadecanoyl-sn-glycero-3-phosphocholine + H(+). It carries out the reaction 1-hexadecanoyl-2-(5-oxopentanoyl)-sn-glycero-3-phosphocholine + H2O = 5-oxopentanoate + 1-hexadecanoyl-sn-glycero-3-phosphocholine + H(+). The enzyme catalyses 1-hexadecanoyl-2-(9-oxononanoyl)-sn-glycero-3-phosphocholine + H2O = 9-oxononanoate + 1-hexadecanoyl-sn-glycero-3-phosphocholine + H(+). It catalyses the reaction 1-hexadecanoyl-2-[9-hydroperoxy-(10E-octadecenoyl)]-sn-glycero-3-phosphocholine + H2O = 9-hydroperoxy-10E-octadecenoate + 1-hexadecanoyl-sn-glycero-3-phosphocholine + H(+). The catalysed reaction is 1-hexadecanoyl-2-(10-hydroperoxy-8E-octadecenoyl)-sn-glycero-3-phosphocholine + H2O = 10-hydroperoxy-(8E)-octadecenoate + 1-hexadecanoyl-sn-glycero-3-phosphocholine + H(+). Its function is as follows. Lipoprotein-associated calcium-independent phospholipase A2 involved in phospholipid catabolism during inflammatory and oxidative stress response. At the lipid-aqueous interface, hydrolyzes the ester bond of fatty acyl group attached at sn-2 position of phospholipids (phospholipase A2 activity). Specifically targets phospholipids with a short-chain fatty acyl group at sn-2 position. Can hydrolyze phospholipids with long fatty acyl chains, only if they carry oxidized functional groups. Hydrolyzes and inactivates platelet-activating factor (PAF, 1-O-alkyl-2-acetyl-sn-glycero-3-phosphocholine), a potent pro-inflammatory signaling lipid that acts through PTAFR on various innate immune cells. Hydrolyzes oxidatively truncated phospholipids carrying an aldehyde group at omega position, preventing their accumulation in lipoprotein particles and uncontrolled pro-inflammatory effects. As part of high-density lipoprotein (HDL) particles, can hydrolyze phospholipids having long-chain fatty acyl hydroperoxides at sn-2 position and protect against potential accumulation of these oxylipins in the vascular wall. Catalyzes the release from membrane phospholipids of F2-isoprostanes, lipid biomarkers of cellular oxidative damage. The sequence is that of Platelet-activating factor acetylhydrolase (PLA2G7) from Cavia porcellus (Guinea pig).